Here is a 243-residue protein sequence, read N- to C-terminus: Small ribosomal subunit protein eS4 (243 aa).

The region spanning 43 to 105 (IPLLYIVRDY…TGEHYRVLPN (63 aa)) is the S4 RNA-binding domain.

It belongs to the eukaryotic ribosomal protein eS4 family.

In Pyrococcus horikoshii (strain ATCC 700860 / DSM 12428 / JCM 9974 / NBRC 100139 / OT-3), this protein is Small ribosomal subunit protein eS4 (rps4e).